Consider the following 120-residue polypeptide: Large ribosomal subunit protein bL17 (120 aa).

This sequence belongs to the bacterial ribosomal protein bL17 family. Part of the 50S ribosomal subunit. Contacts protein L32.

This chain is Large ribosomal subunit protein bL17, found in Mycoplasmopsis synoviae (strain 53) (Mycoplasma synoviae).